An 86-amino-acid chain; its full sequence is Hepcidin-1 (86 aa).

The N-terminal stretch at 1-22 (MKAFSVAVVLVIACMFILESTA) is a signal peptide. Positions 23 to 59 (VPFSEVRTEEVGSFDSPVGEHQQPGGESMHLPEPFRF) are excised as a propeptide. Cystine bridges form between cysteine 68–cysteine 84, cysteine 71–cysteine 74, cysteine 72–cysteine 80, and cysteine 75–cysteine 83.

This sequence belongs to the hepcidin family.

The protein resides in the secreted. Functionally, seems to act as a signaling molecule involved in the maintenance of iron homeostasis. Seems to be required in conjunction with HFE to regulate both intestinal iron absorption and iron storage in macrophages. May also have antimicrobial activity. In Salmo salar (Atlantic salmon), this protein is Hepcidin-1 (hamp1).